A 49-amino-acid chain; its full sequence is Large ribosomal subunit protein bL33 (49 aa).

Belongs to the bacterial ribosomal protein bL33 family.

This is Large ribosomal subunit protein bL33 from Syntrophomonas wolfei subsp. wolfei (strain DSM 2245B / Goettingen).